Reading from the N-terminus, the 276-residue chain is MAIKKYKPTSNGRRGMTVLDFSEITTDQPEKSLLAPLKKKAGRNNQGKITVRHQGGGHKRQYRIIDFKRDKDGIPGRVATIEYDPNRSANIALINYADGEKRYILAPKNLKVGMEIMSGPNADIKVGNALPLENIPVGTLVHNIELKPGRGGQLVRAAGTSAQVLGKEGKYVIIRLASGEVRMILGKCRATVGEVGNEQHELVNIGKAGRARWLGIRPTVRGSVMNPVDHPHGGGEGKAPIGRKSPMTPWGKPTLGYKTRKKKNKSDKFIIRRRKK.

Positions 224 to 276 (VMNPVDHPHGGGEGKAPIGRKSPMTPWGKPTLGYKTRKKKNKSDKFIIRRRKK) are disordered. Positions 258–276 (KTRKKKNKSDKFIIRRRKK) are enriched in basic residues.

It belongs to the universal ribosomal protein uL2 family. Part of the 50S ribosomal subunit. Forms a bridge to the 30S subunit in the 70S ribosome.

One of the primary rRNA binding proteins. Required for association of the 30S and 50S subunits to form the 70S ribosome, for tRNA binding and peptide bond formation. It has been suggested to have peptidyltransferase activity; this is somewhat controversial. Makes several contacts with the 16S rRNA in the 70S ribosome. The protein is Large ribosomal subunit protein uL2 of Geobacillus thermodenitrificans (strain NG80-2).